The primary structure comprises 468 residues: 3-isopropylmalate dehydratase large subunit (468 aa).

Residues Cys-349, Cys-409, and Cys-412 each coordinate [4Fe-4S] cluster.

This sequence belongs to the aconitase/IPM isomerase family. LeuC type 1 subfamily. As to quaternary structure, heterodimer of LeuC and LeuD. [4Fe-4S] cluster is required as a cofactor.

It carries out the reaction (2R,3S)-3-isopropylmalate = (2S)-2-isopropylmalate. The protein operates within amino-acid biosynthesis; L-leucine biosynthesis; L-leucine from 3-methyl-2-oxobutanoate: step 2/4. Catalyzes the isomerization between 2-isopropylmalate and 3-isopropylmalate, via the formation of 2-isopropylmaleate. The sequence is that of 3-isopropylmalate dehydratase large subunit from Jannaschia sp. (strain CCS1).